We begin with the raw amino-acid sequence, 612 residues long: Anaerobic magnesium-protoporphyrin IX monomethyl ester cyclase (612 aa).

Positions 9–143 (NYHSGGAEIA…KAYEADNFAE (135 aa)) constitute a B12-binding domain. A Radical SAM core domain is found at 190–417 (PLGVRVAIPN…MKPKALTRGE (228 aa)). 3 residues coordinate [4Fe-4S] cluster: C204, C208, and C211.

This sequence belongs to the BchE family. The cofactor is [4Fe-4S] cluster. Adenosylcob(III)alamin serves as cofactor.

The catalysed reaction is Mg-protoporphyrin IX 13-monomethyl ester + 3 S-adenosyl-L-methionine + H2O = 3,8-divinyl protochlorophyllide a + 3 5'-deoxyadenosine + 3 L-methionine + 4 H(+). It functions in the pathway porphyrin-containing compound metabolism; bacteriochlorophyll biosynthesis (light-independent). Functionally, involved in the tetrapyrrole biosynthetic pathways leading to chlorophyll and bacteriochlorophyll (BChl). Catalyzes the anaerobic formation of the isocyclic ring (E-ring) in Mg-protoporphyrin monomethyl ester (MPE) to yield protochlorophyllide a (PChlide a) via a six-electron oxidation and the formation of an oxo group at position C13 using oxygen from a water molecule. The chain is Anaerobic magnesium-protoporphyrin IX monomethyl ester cyclase from Cereibacter sphaeroides (strain ATCC 17023 / DSM 158 / JCM 6121 / CCUG 31486 / LMG 2827 / NBRC 12203 / NCIMB 8253 / ATH 2.4.1.) (Rhodobacter sphaeroides).